Reading from the N-terminus, the 393-residue chain is NADH-quinone oxidoreductase subunit H 2 (393 aa).

10 helical membrane passes run Val13–Val33, Ala79–Ile99, Val112–Gly132, Leu158–Val178, Val186–Ala206, Leu240–Phe260, Leu278–Ile298, Val309–Val329, Met333–Phe353, and Ile368–Gly388.

The protein belongs to the complex I subunit 1 family. In terms of assembly, NDH-1 is composed of 14 different subunits. Subunits NuoA, H, J, K, L, M, N constitute the membrane sector of the complex.

Its subcellular location is the cell inner membrane. It catalyses the reaction a quinone + NADH + 5 H(+)(in) = a quinol + NAD(+) + 4 H(+)(out). Its function is as follows. NDH-1 shuttles electrons from NADH, via FMN and iron-sulfur (Fe-S) centers, to quinones in the respiratory chain. The immediate electron acceptor for the enzyme in this species is believed to be ubiquinone. Couples the redox reaction to proton translocation (for every two electrons transferred, four hydrogen ions are translocated across the cytoplasmic membrane), and thus conserves the redox energy in a proton gradient. This subunit may bind ubiquinone. This Solibacter usitatus (strain Ellin6076) protein is NADH-quinone oxidoreductase subunit H 2.